Here is a 156-residue protein sequence, read N- to C-terminus: Transcription antitermination protein NusB (156 aa).

This sequence belongs to the NusB family.

Its function is as follows. Involved in transcription antitermination. Required for transcription of ribosomal RNA (rRNA) genes. Binds specifically to the boxA antiterminator sequence of the ribosomal RNA (rrn) operons. The polypeptide is Transcription antitermination protein NusB (Rickettsia felis (strain ATCC VR-1525 / URRWXCal2) (Rickettsia azadi)).